Here is a 610-residue protein sequence, read N- to C-terminus: Ecto-NOX disulfide-thiol exchanger 2 (610 aa).

Positions 128–207 (KTVFVGGLPE…GRLHVDFAQA (80 aa)) constitute an RRM domain. 2 coiled-coil regions span residues 293 to 328 (IQSA…LSGI) and 381 to 505 (RREE…KESC).

This sequence belongs to the ENOX family. Cu cation is required as a cofactor. In terms of processing, glycosylated. Found in the sera of cancer patients with a wide variety of cancers including breast, prostate, lung and ovarian cancers, leukemias, and lymphomas. Not found in the serum of healthy volunteers or patients with disorders other than cancer. Probably shed into serum by cancer cells. Found on the cell borders of renal, kidney and ovarian carcinomas but not on the borders of surrounding non-cancerous stromal cells.

The protein localises to the cell membrane. It localises to the secreted. It is found in the extracellular space. With respect to regulation, inhibited by the antitumor sulfonylurea LY181984, the vabilloid capsaicin, and retinoids. In terms of biological role, may be involved in cell growth. Probably acts as a terminal oxidase of plasma electron transport from cytosolic NAD(P)H via hydroquinones to acceptors at the cell surface. Hydroquinone oxidase activity alternates with a protein disulfide-thiol interchange/oxidoreductase activity which may control physical membrane displacements associated with vesicle budding or cell enlargement. The activities oscillate with a period length of 22 minutes and play a role in control of the ultradian cellular biological clock. The protein is Ecto-NOX disulfide-thiol exchanger 2 (ENOX2) of Homo sapiens (Human).